We begin with the raw amino-acid sequence, 274 residues long: NH(3)-dependent NAD(+) synthetase (274 aa).

46–53 serves as a coordination point for ATP; it reads GISGGQDS. Aspartate 52 lines the Mg(2+) pocket. Arginine 140 is a binding site for deamido-NAD(+). Threonine 160 contacts ATP. Glutamate 165 is a binding site for Mg(2+). Lysine 173 and aspartate 180 together coordinate deamido-NAD(+). Residues lysine 189 and threonine 211 each contribute to the ATP site. 260–261 is a binding site for deamido-NAD(+); that stretch reads HK.

Belongs to the NAD synthetase family. As to quaternary structure, homodimer.

It carries out the reaction deamido-NAD(+) + NH4(+) + ATP = AMP + diphosphate + NAD(+) + H(+). The protein operates within cofactor biosynthesis; NAD(+) biosynthesis; NAD(+) from deamido-NAD(+) (ammonia route): step 1/1. In terms of biological role, catalyzes the ATP-dependent amidation of deamido-NAD to form NAD. Uses ammonia as a nitrogen source. This is NH(3)-dependent NAD(+) synthetase from Streptococcus pyogenes serotype M6 (strain ATCC BAA-946 / MGAS10394).